The primary structure comprises 156 residues: Small ribosomal subunit protein eS10 (156 aa).

A disordered region spans residues 91 to 156 (LKRQTRPEAA…FGRGRQEQEE (66 aa)). Positions 95–119 (TRPEAARPRPKEGAPRAQVGEDRAG) are enriched in basic and acidic residues.

Belongs to the eukaryotic ribosomal protein eS10 family.

It localises to the cytoplasm. The sequence is that of Small ribosomal subunit protein eS10 (RPS10) from Lumbricus rubellus (Humus earthworm).